The following is a 169-amino-acid chain: MKPSSSNSRSKGHAKARRKTREELDQEARDRKRQKKRRGHAPGSRAAGGNTTSGSKGQNAPKDPRIGSKTPIPLGVAEKVTKQHKPKSEKPMLSLQAELELLETDERLDALLERLEAGETLSAEEQSWVDVKLDRIDELMQKLGLSYDDDEEEEEDEKQEDMMRLLRGN.

Disordered regions lie at residues 1–92 (MKPS…EKPM) and 146–169 (SYDDDEEEEEDEKQEDMMRLLRGN). Positions 10–19 (SKGHAKARRK) are enriched in basic residues. A compositionally biased stretch (basic and acidic residues) spans 20 to 30 (TREELDQEARD). Over residues 31–40 (RKRQKKRRGH) the composition is skewed to basic residues. Residues 49–58 (GNTTSGSKGQ) show a composition bias toward polar residues. A compositionally biased stretch (acidic residues) spans 147–159 (YDDDEEEEEDEKQ). The span at 160–169 (EDMMRLLRGN) shows a compositional bias: basic and acidic residues.

This sequence belongs to the YihI family. As to quaternary structure, interacts with Der.

Functionally, a GTPase-activating protein (GAP) that modifies Der/EngA GTPase function. May play a role in ribosome biogenesis. The sequence is that of Der GTPase-activating protein YihI from Escherichia coli O1:K1 / APEC.